Here is a 461-residue protein sequence, read N- to C-terminus: Ribitol-5-phosphate transferase FKTN (461 aa).

Residues 1–7 are Cytoplasmic-facing; the sequence is MSRINKN. A required and sufficient for interaction with POMGNT1 region spans residues 6–27; it reads KNVVLALLTLTSSAFLLFQLYY. A helical; Signal-anchor for type II membrane protein transmembrane segment spans residues 8–28; the sequence is VVLALLTLTSSAFLLFQLYYY. The Lumenal portion of the chain corresponds to 29-461; that stretch reads KHYLSARNGP…SEWDEVIQLY (433 aa). Residue N92 is glycosylated (N-linked (GlcNAc...) asparagine).

It belongs to the LicD transferase family. In terms of assembly, forms a complex composed of FKTN/fukutin, FKRP and RXYLT1/TMEM5. Interacts (via transmembrane domain) with POMGNT1; the interaction is direct and is required for normal POMGNT1 location in Golgi membranes. In terms of tissue distribution, expressed in the retina, with highest levels found in the inner segments of photoreceptors and the outer plexiform layer (at protein level). Expressed at lower levels in the inner and outer nuclear layers, the inner plexiform layers, and the ganglion cell layers of the retina (at protein level). Expressed in the heart, brain, spleen, lung, liver, skeletal muscle, kidney and testis.

Its subcellular location is the golgi apparatus membrane. The protein localises to the cytoplasm. The protein resides in the nucleus. It localises to the endoplasmic reticulum. The enzyme catalyses 3-O-[beta-D-GalNAc-(1-&gt;3)-beta-D-GlcNAc-(1-&gt;4)-(O-6-P-alpha-D-Man)]-Thr-[protein] + CDP-L-ribitol = 3-O-[Rib-ol-P-3-beta-D-GalNAc-(1-&gt;3)-beta-D-GlcNAc-(1-&gt;4)-(O-6-P-alpha-D-Man)]-Thr-[protein] + CMP + H(+). It participates in protein modification; protein glycosylation. Its function is as follows. Catalyzes the transfer of CDP-ribitol to the distal N-acetylgalactosamine of the phosphorylated O-mannosyl trisaccharide (N-acetylgalactosamine-beta-3-N-acetylglucosamine-beta-4-(phosphate-6-)mannose), a carbohydrate structure present in alpha-dystroglycan (DAG1). This constitutes the first step in the formation of the ribitol 5-phosphate tandem repeat which links the phosphorylated O-mannosyl trisaccharide to the ligand binding moiety composed of repeats of 3-xylosyl-alpha-1,3-glucuronic acid-beta-1. Required for normal location of POMGNT1 in Golgi membranes, and for normal POMGNT1 activity. May interact with and reinforce a large complex encompassing the outside and inside of muscle membranes. Could be involved in brain development. The chain is Ribitol-5-phosphate transferase FKTN from Mus musculus (Mouse).